An 808-amino-acid polypeptide reads, in one-letter code: Protein SQS1 (808 aa).

Basic residues-rich tracts occupy residues 1–20 (MAKR…KRGG) and 28–37 (RGSKRGRGGR). 3 disordered regions span residues 1–67 (MAKR…GDLS), 151–180 (RSKN…DMEI), and 485–529 (ETPP…EELG). 2 stretches are compositionally biased toward basic and acidic residues: residues 39–48 (RGFEETERSA) and 153–179 (KNQE…KDME). The region spanning 621 to 683 (GFHVQNIRDE…HTHIMVEKVK (63 aa)) is the R3H domain. The region spanning 748-795 (QDNIGRRMLEKLGWSSGEGLGAHGNKGISIPVMARVKKSKSGLRHSKE) is the G-patch domain. The segment at 764-808 (GEGLGAHGNKGISIPVMARVKKSKSGLRHSKEDEDTGRSSSFRKK) is disordered. Residues 782-791 (RVKKSKSGLR) are compositionally biased toward basic residues.

Belongs to the SQS1 family.

The protein localises to the cytoplasm. The protein resides in the nucleus. Functionally, may be involved in splicing. The sequence is that of Protein SQS1 (SQS1) from Candida glabrata (strain ATCC 2001 / BCRC 20586 / JCM 3761 / NBRC 0622 / NRRL Y-65 / CBS 138) (Yeast).